A 360-amino-acid chain; its full sequence is Protein phosphatase 1 regulatory subunit 7 (360 aa).

Positions 1–63 are disordered; sequence MAAERGAGQQ…RGAEDPEEEH (63 aa). Position 2 is an N-acetylalanine (Ala-2). Phosphoserine occurs at positions 12, 24, 27, 44, and 47. The span at 17 to 34 shows a compositional bias: basic and acidic residues; that stretch reads EVDRRVESEESGDEEGKK. LRR repeat units lie at residues 77 to 98, 99 to 120, 121 to 142, 143 to 164, 165 to 186, 187 to 208, 209 to 230, 231 to 252, 253 to 274, 275 to 296, and 297 to 318; these read DAED…EVLK, KVKS…DELQ, SLRE…EALT, ELEV…DKLT, QLKK…STLQ, QLQM…DTLT, NLES…DALS, NLTV…QNLV, NLRE…ENNN, KLTM…SHLT, and ELQE…DELK. At Ser-322 the chain carries Phosphoserine. The region spanning 331-360 is the LRRCT domain; it reads NPLQKDPQYRRKVMLALPSVRQIDATFVRF.

This sequence belongs to the SDS22 family. As to quaternary structure, interacts with PPP1CA, PPP1CB and PPP1CC/PPP1G.

It is found in the nucleus. Regulatory subunit of protein phosphatase 1. In Rattus norvegicus (Rat), this protein is Protein phosphatase 1 regulatory subunit 7 (Ppp1r7).